Reading from the N-terminus, the 271-residue chain is Monalysin (271 aa).

The propeptide occupies 1 to 33; the sequence is MTIKEELGQPQSHSIELDEVSKEAASTRAALTS. Residues 102-170 are pore-forming domain; that stretch reads IPQNVTTTLS…FTDTTEMKGP (69 aa).

As to quaternary structure, pro-Monalysin forms a stable donut-like 18-mer complex composed of two disk-shaped nonamers held together by N-terminal swapping of the pro-peptides. After proteolytic cleavage, the inactive 18-mer complex probably dissociates into two disk-shaped active nonamers in which the transmembrane segments are unmasked and ready to engage the conformational change leading to the pore formation into the target membrane. Multimerizes into circular-like structures and barrel-like aggregates. In terms of processing, requires N-terminal cleavage to become fully active. The metalloprotease AprA can induce the rapid cleavage of pro-Monalysin into its active form. Can also be processed by trypsin.

It is found in the secreted. It localises to the host cell membrane. Its function is as follows. Pore-forming toxin that contributes to the virulence of P.entomophila against Drosophila, playing an important role in host intestinal damage and lethality. Displays cytolytic and hemolytic activity. The protein is Monalysin of Pseudomonas entomophila (strain L48).